Reading from the N-terminus, the 507-residue chain is Beta-glucosidase 3 (507 aa).

An N-terminal signal peptide occupies residues 1–23 (MELTLSLLTIFLLFFALSGRCSD). Q41 contacts a beta-D-glucoside. A glycan (N-linked (GlcNAc...) asparagine) is linked at N64. Residues H138 and 183 to 184 (NE) contribute to the a beta-D-glucoside site. The active-site Proton donor is E184. C203 and C210 are disulfide-bonded. N-linked (GlcNAc...) asparagine glycans are attached at residues N209 and N214. Y326 is an a beta-D-glucoside binding site. An N-linked (GlcNAc...) asparagine glycan is attached at N361. Residue E394 coordinates a beta-D-glucoside. The active-site Nucleophile is the E394. Residue N429 is glycosylated (N-linked (GlcNAc...) asparagine). A beta-D-glucoside contacts are provided by W439 and F455. Residues N461, N485, and N500 are each glycosylated (N-linked (GlcNAc...) asparagine).

Belongs to the glycosyl hydrolase 1 family.

The catalysed reaction is Hydrolysis of terminal, non-reducing beta-D-glucosyl residues with release of beta-D-glucose.. In Arabidopsis thaliana (Mouse-ear cress), this protein is Beta-glucosidase 3.